Reading from the N-terminus, the 161-residue chain is Early E3 17.7 kDa glycoprotein (161 aa).

Residues Asn-14 and Asn-87 are each glycosylated (N-linked (GlcNAc...) asparagine; by host). The chain crosses the membrane as a helical span at residues 102–129 (IINPAIFLFLHVLTLVIVLAMAAEVIYN).

It is found in the host membrane. The protein is Early E3 17.7 kDa glycoprotein of Murine adenovirus A serotype 1 (MAdV-1).